The following is a 307-amino-acid chain: Hepatitis A virus cellular receptor 1 homolog (307 aa).

Residues M1–S21 form the signal peptide. In terms of domain architecture, Ig-like V-type spans Y22 to S124. Over Y22–G235 the chain is Extracellular. Intrachain disulfides connect C37/C108, C49/C60, and C55/C107. Positions P129–T177 are disordered. Residues P139–T175 show a composition bias toward low complexity. A glycan (N-linked (GlcNAc...) asparagine) is linked at N206. The helical transmembrane segment at F236–V256 threads the bilayer. Topologically, residues T257–E307 are cytoplasmic.

It belongs to the immunoglobulin superfamily. TIM family. As to quaternary structure, interacts with STAM. Interacts with SELPLG. Expressed at a low level in normal kidney but are increased dramatically in postischemic kidney. Expressed in proliferating bromodeoxyuridine-positive and dedifferentiated vimentin-positive epithelial cells in regenerating proximal tubules.

The protein localises to the cell membrane. Functionally, phosphatidylserine receptor that plays an important functional role in regulatory B-cells homeostasis including generation, expansion and suppressor functions. As P-selectin/SELPLG ligand, plays a specialized role in activated but not naive T-cell trafficking during inflammatory responses. Controls thereby T-cell accumulation in the inflamed central nervous system (CNS) and the induction of autoimmune disease. Also regulates expression of various anti-inflammatory cytokines and co-inhibitory ligands including IL10. Acts as a regulator of T-cell proliferation. May play a role in kidney injury and repair. In Rattus norvegicus (Rat), this protein is Hepatitis A virus cellular receptor 1 homolog (Havcr1).